A 293-amino-acid polypeptide reads, in one-letter code: Proline iminopeptidase (293 aa).

Residues lysine 28 to glutamate 277 enclose the AB hydrolase-1 domain. Serine 104 functions as the Nucleophile in the catalytic mechanism. The active site involves aspartate 244. The Proton donor role is filled by histidine 271.

It belongs to the peptidase S33 family.

The catalysed reaction is Release of N-terminal proline from a peptide.. Functionally, releases the N-terminal proline from various substrates. This Clostridium botulinum (strain Hall / ATCC 3502 / NCTC 13319 / Type A) protein is Proline iminopeptidase.